A 207-amino-acid chain; its full sequence is Protein GET1 (207 aa).

The Lumenal portion of the chain corresponds to 1-4 (MPSL). A helical membrane pass occupies residues 5-24 (LISVLFLHIAIYIINTIGAS). Residues 25 to 110 (TIDSLLWLIY…LFDVAVKALR (86 aa)) lie on the Cytoplasmic side of the membrane. Positions 44 to 97 (MAREQHQMKLEVVQLKREMNATSSQDEFAKWAKLRRRHDKALEEYEVKNKQFSR) form a coiled coil. The chain crosses the membrane as a helical span at residues 111–131 (WAGTSGLILLLQFWFSKTPIF). Topologically, residues 132–155 (TLPPSWIPWQVEWVLSFPRAPMGT) are lumenal. A helical membrane pass occupies residues 156 to 172 (VSIQVWGGACAVMVALV). At 173–207 (GEAIGATVRYLYGSKDSMEAIKVGAGAVEKEKKRQ) the chain is on the cytoplasmic side.

This sequence belongs to the WRB/GET1 family. Interacts with GET3.

Its subcellular location is the endoplasmic reticulum membrane. In terms of biological role, required for the post-translational delivery of tail-anchored (TA) proteins to the endoplasmic reticulum. Acts as a membrane receptor for soluble GET3, which recognizes and selectively binds the transmembrane domain of TA proteins in the cytosol. This is Protein GET1 from Paracoccidioides lutzii (strain ATCC MYA-826 / Pb01) (Paracoccidioides brasiliensis).